The chain runs to 203 residues: Glycerol-3-phosphate acyltransferase (203 aa).

A run of 5 helical transmembrane segments spans residues 2 to 22, 54 to 74, 80 to 100, 114 to 134, and 153 to 173; these read LATL…AILV, CLVL…AYFL, ALGL…FFGF, LPIG…MVAI, and TWLI…LIIF.

It belongs to the PlsY family. In terms of assembly, probably interacts with PlsX.

It is found in the cell inner membrane. The catalysed reaction is an acyl phosphate + sn-glycerol 3-phosphate = a 1-acyl-sn-glycero-3-phosphate + phosphate. It participates in lipid metabolism; phospholipid metabolism. Its function is as follows. Catalyzes the transfer of an acyl group from acyl-phosphate (acyl-PO(4)) to glycerol-3-phosphate (G3P) to form lysophosphatidic acid (LPA). This enzyme utilizes acyl-phosphate as fatty acyl donor, but not acyl-CoA or acyl-ACP. This is Glycerol-3-phosphate acyltransferase from Pseudoalteromonas translucida (strain TAC 125).